A 2699-amino-acid polypeptide reads, in one-letter code: UPF0648 protein C3H5.09c (2699 aa).

Asn21 carries an N-linked (GlcNAc...) asparagine glycan. Residues Phe24–Tyr44 form a helical membrane-spanning segment. 14 N-linked (GlcNAc...) asparagine glycosylation sites follow: Asn288, Asn293, Asn334, Asn345, Asn433, Asn507, Asn551, Asn655, Asn760, Asn993, Asn1000, Asn1003, Asn1006, and Asn1009. Residues Lys975–Lys1021 form a disordered region. Residues Pro981–Ser995 show a composition bias toward low complexity. The stretch at Asn1006–Leu1033 forms a coiled coil. A compositionally biased stretch (polar residues) spans His1010–Gln1019. N-linked (GlcNAc...) asparagine glycosylation is found at Asn1026, Asn1039, Asn1046, Asn1236, Asn1255, Asn1344, Asn1527, Asn1595, Asn1791, Asn1916, Asn2032, Asn2048, Asn2256, Asn2285, Asn2388, Asn2407, Asn2417, Asn2508, and Asn2622. Positions Gln1758–Glu1818 form a coiled coil. The interval Phe2393 to Ser2447 is disordered. The segment covering Gly2408–Gly2420 has biased composition (polar residues). Disordered regions lie at residues Ala2606 to Pro2632 and Ala2647 to Asp2676. Residues Ser2617 to Pro2632 show a composition bias toward polar residues.

Belongs to the UPF0648 family.

The protein resides in the membrane. The sequence is that of UPF0648 protein C3H5.09c from Schizosaccharomyces pombe (strain 972 / ATCC 24843) (Fission yeast).